The primary structure comprises 720 residues: Neurochondrin (720 aa).

The protein belongs to the neurochondrin family.

Its subcellular location is the cytoplasm. The protein resides in the cytosol. It localises to the cell projection. It is found in the dendrite. The protein localises to the postsynapse. Functionally, probably involved in signal transduction, in the nervous system. Required for the spatial learning process. May also be involved in neurite outgrowth. In Xenopus laevis (African clawed frog), this protein is Neurochondrin (ncdn).